Consider the following 505-residue polypeptide: ATP synthase subunit alpha (505 aa).

Position 169 to 176 (169 to 176) interacts with ATP; it reads GDRQTGKT.

Belongs to the ATPase alpha/beta chains family. As to quaternary structure, F-type ATPases have 2 components, CF(1) - the catalytic core - and CF(0) - the membrane proton channel. CF(1) has five subunits: alpha(3), beta(3), gamma(1), delta(1), epsilon(1). CF(0) has three main subunits: a(1), b(2) and c(9-12). The alpha and beta chains form an alternating ring which encloses part of the gamma chain. CF(1) is attached to CF(0) by a central stalk formed by the gamma and epsilon chains, while a peripheral stalk is formed by the delta and b chains.

The protein resides in the cell membrane. The catalysed reaction is ATP + H2O + 4 H(+)(in) = ADP + phosphate + 5 H(+)(out). Produces ATP from ADP in the presence of a proton gradient across the membrane. The alpha chain is a regulatory subunit. The polypeptide is ATP synthase subunit alpha (Alkaliphilus metalliredigens (strain QYMF)).